The following is a 523-amino-acid chain: Arabinose import ATP-binding protein AraG (523 aa).

2 ABC transporter domains span residues 20 to 255 (LAFR…MVGR) and 268 to 511 (IGSE…MLRT). 52–59 (GENGAGKS) provides a ligand contact to ATP.

It belongs to the ABC transporter superfamily. Arabinose importer (TC 3.A.1.2.2) family. In terms of assembly, the complex is composed of two ATP-binding proteins (AraG), two transmembrane proteins (AraH) and a solute-binding protein (AraF).

It localises to the cell inner membrane. It carries out the reaction L-arabinose(out) + ATP + H2O = L-arabinose(in) + ADP + phosphate + H(+). Part of the ABC transporter complex AraFGH involved in arabinose import. Responsible for energy coupling to the transport system. The polypeptide is Arabinose import ATP-binding protein AraG (Yersinia pestis bv. Antiqua (strain Antiqua)).